A 274-amino-acid chain; its full sequence is Peroxiredoxin-4 (274 aa).

The N-terminal stretch at M1–G40 is a signal peptide. The Thioredoxin domain maps to A82–Y240. C127 (cysteine sulfenic acid (-SOH) intermediate) is an active-site residue.

Belongs to the peroxiredoxin family. AhpC/Prx1 subfamily. Homodimer; disulfide-linked, upon oxidation. 5 homodimers assemble to form a ring-like decamer. Post-translationally, the enzyme can be inactivated by further oxidation of the cysteine sulfenic acid (C(P)-SOH) to sulphinic acid (C(P)-SO2H) and sulphonic acid (C(P)-SO3H) instead of its condensation to a disulfide bond.

The protein localises to the cytoplasm. It localises to the endoplasmic reticulum. It carries out the reaction a hydroperoxide + [thioredoxin]-dithiol = an alcohol + [thioredoxin]-disulfide + H2O. Its function is as follows. Thiol-specific peroxidase that catalyzes the reduction of hydrogen peroxide and organic hydroperoxides to water and alcohols, respectively. Plays a role in cell protection against oxidative stress by detoxifying peroxides and as sensor of hydrogen peroxide-mediated signaling events. Regulates the activation of NF-kappa-B in the cytosol by a modulation of I-kappa-B-alpha phosphorylation. The chain is Peroxiredoxin-4 (Prdx4) from Mus musculus (Mouse).